We begin with the raw amino-acid sequence, 501 residues long: 5-beta-cholestane-3-alpha,7-alpha-diol 12-alpha-hydroxylase (501 aa).

Residues 1-21 traverse the membrane as a helical segment; the sequence is MVLWGPVLGVLLVAIVGYLCL. Serine 326 is modified (phosphoserine). Cysteine 440 lines the heme pocket.

This sequence belongs to the cytochrome P450 family. Heme is required as a cofactor.

It localises to the endoplasmic reticulum membrane. It is found in the microsome membrane. The enzyme catalyses 7alpha-hydroxycholest-4-en-3-one + reduced [NADPH--hemoprotein reductase] + O2 = 7alpha,12alpha-dihydroxycholest-4-en-3-one + oxidized [NADPH--hemoprotein reductase] + H2O + H(+). It carries out the reaction 5beta-cholestane-3alpha,7alpha-diol + reduced [NADPH--hemoprotein reductase] + O2 = 5beta-cholestane-3alpha,7alpha,12alpha-triol + oxidized [NADPH--hemoprotein reductase] + H2O + H(+). The catalysed reaction is chenodeoxycholate + reduced [NADPH--hemoprotein reductase] + O2 = cholate + oxidized [NADPH--hemoprotein reductase] + H2O + H(+). The protein operates within lipid metabolism; bile acid biosynthesis. Functionally, a cytochrome P450 monooxygenase involved in primary bile acid biosynthesis. Catalyzes the 12alpha-hydroxylation of 7alpha-hydroxy-4-cholesten-3-one, an intermediate metabolite in cholic acid biosynthesis. Controls biliary balance of cholic acid and chenodeoxycholic acid, ultimately regulating the intestinal absorption of dietary lipids. Mechanistically, uses molecular oxygen inserting one oxygen atom into a substrate, and reducing the second into a water molecule, with two electrons provided by NADPH via cytochrome P450 reductase (CPR; NADPH--hemoprotein reductase). In Sus scrofa (Pig), this protein is 5-beta-cholestane-3-alpha,7-alpha-diol 12-alpha-hydroxylase (CYP8B1).